Consider the following 89-residue polypeptide: Exodeoxyribonuclease 7 small subunit (89 aa).

It belongs to the XseB family. Heterooligomer composed of large and small subunits.

Its subcellular location is the cytoplasm. It carries out the reaction Exonucleolytic cleavage in either 5'- to 3'- or 3'- to 5'-direction to yield nucleoside 5'-phosphates.. Its function is as follows. Bidirectionally degrades single-stranded DNA into large acid-insoluble oligonucleotides, which are then degraded further into small acid-soluble oligonucleotides. The polypeptide is Exodeoxyribonuclease 7 small subunit (Chlorobium phaeobacteroides (strain DSM 266 / SMG 266 / 2430)).